A 760-amino-acid polypeptide reads, in one-letter code: Penicillin-binding protein 1B (760 aa).

Residues methionine 1–tyrosine 8 lie on the Cytoplasmic side of the membrane. A helical; Signal-anchor for type II membrane protein transmembrane segment spans residues phenylalanine 9 to tyrosine 29. Topologically, residues valine 30–phenylalanine 760 are extracellular. Residues phenylalanine 136–asparagine 308 form a transglycosylase region. The active-site Proton donor; for transglycosylase activity is glutamate 174. The segment at glutamate 392–arginine 684 is transpeptidase. Catalysis depends on serine 451, which acts as the Acyl-ester intermediate; for transpeptidase activity.

This sequence in the N-terminal section; belongs to the glycosyltransferase 51 family. The protein in the C-terminal section; belongs to the transpeptidase family.

The protein resides in the cell membrane. It carries out the reaction [GlcNAc-(1-&gt;4)-Mur2Ac(oyl-L-Ala-gamma-D-Glu-L-Lys-D-Ala-D-Ala)](n)-di-trans,octa-cis-undecaprenyl diphosphate + beta-D-GlcNAc-(1-&gt;4)-Mur2Ac(oyl-L-Ala-gamma-D-Glu-L-Lys-D-Ala-D-Ala)-di-trans,octa-cis-undecaprenyl diphosphate = [GlcNAc-(1-&gt;4)-Mur2Ac(oyl-L-Ala-gamma-D-Glu-L-Lys-D-Ala-D-Ala)](n+1)-di-trans,octa-cis-undecaprenyl diphosphate + di-trans,octa-cis-undecaprenyl diphosphate + H(+). The enzyme catalyses Preferential cleavage: (Ac)2-L-Lys-D-Ala-|-D-Ala. Also transpeptidation of peptidyl-alanyl moieties that are N-acyl substituents of D-alanine.. Its pathway is cell wall biogenesis; peptidoglycan biosynthesis. Cell wall formation. Synthesis of cross-linked peptidoglycan from the lipid intermediates. The enzyme has a penicillin-insensitive transglycosylase N-terminal domain (formation of linear glycan strands) and a penicillin-sensitive transpeptidase C-terminal domain (cross-linking of the peptide subunits). This chain is Penicillin-binding protein 1B (mrcB), found in Buchnera aphidicola subsp. Acyrthosiphon pisum (strain APS) (Acyrthosiphon pisum symbiotic bacterium).